Reading from the N-terminus, the 412-residue chain is Alpha-1-antitrypsin 1-3 (412 aa).

The signal sequence occupies residues Met1–Ala24. N-linked (GlcNAc...) asparagine glycans are attached at residues Asn64, Asn101, and Asn265. Residues Ala368–His387 form an RCL region.

This sequence belongs to the serpin family.

The protein resides in the secreted. Its function is as follows. Inhibitor of serine proteases. Can inhibit trypsin and chymotrypsin; relatively ineffective against elastase. The chain is Alpha-1-antitrypsin 1-3 (Serpina1c) from Mus musculus (Mouse).